We begin with the raw amino-acid sequence, 616 residues long: Chaperone protein HtpG (616 aa).

The segment at 1–334 (MAEKQIHTFQ…TADLPLNVSR (334 aa)) is a; substrate-binding. Residues 335-549 (EILQGNKVVD…ENEMGGNMER (215 aa)) are b. The segment at 550-616 (IMKSLGQDVP…FVKRINKLIN (67 aa)) is c.

This sequence belongs to the heat shock protein 90 family. As to quaternary structure, homodimer.

The protein localises to the cytoplasm. Molecular chaperone. Has ATPase activity. The sequence is that of Chaperone protein HtpG from Ruthia magnifica subsp. Calyptogena magnifica.